Reading from the N-terminus, the 79-residue chain is ATP synthase subunit c (79 aa).

The next 2 helical transmembrane spans lie at 11 to 31 and 55 to 75; these read ISAA…IGIL and IVMG…LYLI.

Belongs to the ATPase C chain family. F-type ATPases have 2 components, F(1) - the catalytic core - and F(0) - the membrane proton channel. F(1) has five subunits: alpha(3), beta(3), gamma(1), delta(1), epsilon(1). F(0) has three main subunits: a(1), b(2) and c(10-14). The alpha and beta chains form an alternating ring which encloses part of the gamma chain. F(1) is attached to F(0) by a central stalk formed by the gamma and epsilon chains, while a peripheral stalk is formed by the delta and b chains.

The protein resides in the cell membrane. Functionally, f(1)F(0) ATP synthase produces ATP from ADP in the presence of a proton or sodium gradient. F-type ATPases consist of two structural domains, F(1) containing the extramembraneous catalytic core and F(0) containing the membrane proton channel, linked together by a central stalk and a peripheral stalk. During catalysis, ATP synthesis in the catalytic domain of F(1) is coupled via a rotary mechanism of the central stalk subunits to proton translocation. Key component of the F(0) channel; it plays a direct role in translocation across the membrane. A homomeric c-ring of between 10-14 subunits forms the central stalk rotor element with the F(1) delta and epsilon subunits. This is ATP synthase subunit c from Wigglesworthia glossinidia brevipalpis.